The following is a 497-amino-acid chain: Probable cytosol aminopeptidase (497 aa).

Positions 264 and 269 each coordinate Mn(2+). Lys276 is a catalytic residue. Asp287, Asp347, and Glu349 together coordinate Mn(2+). The active site involves Arg351.

This sequence belongs to the peptidase M17 family. Mn(2+) serves as cofactor.

The protein localises to the cytoplasm. The enzyme catalyses Release of an N-terminal amino acid, Xaa-|-Yaa-, in which Xaa is preferably Leu, but may be other amino acids including Pro although not Arg or Lys, and Yaa may be Pro. Amino acid amides and methyl esters are also readily hydrolyzed, but rates on arylamides are exceedingly low.. It catalyses the reaction Release of an N-terminal amino acid, preferentially leucine, but not glutamic or aspartic acids.. Functionally, presumably involved in the processing and regular turnover of intracellular proteins. Catalyzes the removal of unsubstituted N-terminal amino acids from various peptides. In Thermosynechococcus vestitus (strain NIES-2133 / IAM M-273 / BP-1), this protein is Probable cytosol aminopeptidase.